The chain runs to 545 residues: Threonine--tRNA ligase catalytic subunit (545 aa).

The segment at 139-433 (DHRLIGEKLD…LLEHFKGKLP (295 aa)) is catalytic. Zn(2+)-binding residues include C231, H282, and H410.

The protein belongs to the class-II aminoacyl-tRNA synthetase family. Homodimer. Probably interacts with its editing subunit. The cofactor is Zn(2+).

It is found in the cytoplasm. It carries out the reaction tRNA(Thr) + L-threonine + ATP = L-threonyl-tRNA(Thr) + AMP + diphosphate + H(+). In terms of biological role, catalyzes the attachment of threonine to tRNA(Thr) in a two-step reaction: L-threonine is first activated by ATP to form Thr-AMP and then transferred to the acceptor end of tRNA(Thr). Also activates L-serine and transfers it to tRNA(Thr) but cannot deacylate incorrectly charged amino acid; unlike most archaea the editing function is found in a freestanding protein. This chain is Threonine--tRNA ligase catalytic subunit, found in Saccharolobus islandicus (strain L.S.2.15 / Lassen #1) (Sulfolobus islandicus).